Reading from the N-terminus, the 359-residue chain is MKKYLALALIAPLLISCSTTKKGDTYNEAWVKDTNGFDILMGQFAHNIENIWGFKEVVIAGPKDYVKYTDQYQTRSHINFDDGTITIETIAGTEPAAHLRRAIIKTLLMGDDPSSVDLYSDVDDITISKEPFLYGQVVDNTGQPIRWEGRASNFADYLLKNRLKSRSNGLRIIYSVTINMVPNHLDKRAHKYLGMVRQSSRKYGVDESLILAIMQTESSFNPYAVSRSDALGLMQVVQHTAGKDVFRSQGKSGTPSRSFLFDPASNIDTGTAYLAMLNNVYLGGIDNPTSRRYAVITAYNGGAGSVLRVFSNDKIQAANIINTMTPGDVYQTLTTRHPSAESRRYLYKVNTAQKSYRRR.

The N-terminal stretch at 1–16 is a signal peptide; that stretch reads MKKYLALALIAPLLIS. Cys17 carries N-palmitoyl cysteine lipidation. Cys17 carries S-diacylglycerol cysteine lipidation.

The protein belongs to the transglycosylase Slt family.

The protein localises to the cell outer membrane. It carries out the reaction Exolytic cleavage of the (1-&gt;4)-beta-glycosidic linkage between N-acetylmuramic acid (MurNAc) and N-acetylglucosamine (GlcNAc) residues in peptidoglycan, from either the reducing or the non-reducing ends of the peptidoglycan chains, with concomitant formation of a 1,6-anhydrobond in the MurNAc residue.. In terms of biological role, murein-degrading enzyme. May play a role in recycling of muropeptides during cell elongation and/or cell division. The chain is Membrane-bound lytic murein transglycosylase C from Escherichia fergusonii (strain ATCC 35469 / DSM 13698 / CCUG 18766 / IAM 14443 / JCM 21226 / LMG 7866 / NBRC 102419 / NCTC 12128 / CDC 0568-73).